The sequence spans 639 residues: Threonine--tRNA ligase (639 aa).

Positions 1–61 constitute a TGS domain; that stretch reads MINITLKDGK…KEDSELEILT (61 aa). The catalytic stretch occupies residues 242–532; it reads DHRKLGKELD…LIEHFAGAFP (291 aa). 3 residues coordinate Zn(2+): Cys-333, His-384, and His-509.

Belongs to the class-II aminoacyl-tRNA synthetase family. Homodimer. Requires Zn(2+) as cofactor.

The protein localises to the cytoplasm. The catalysed reaction is tRNA(Thr) + L-threonine + ATP = L-threonyl-tRNA(Thr) + AMP + diphosphate + H(+). Its function is as follows. Catalyzes the attachment of threonine to tRNA(Thr) in a two-step reaction: L-threonine is first activated by ATP to form Thr-AMP and then transferred to the acceptor end of tRNA(Thr). Also edits incorrectly charged L-seryl-tRNA(Thr). The chain is Threonine--tRNA ligase from Clostridium tetani (strain Massachusetts / E88).